A 193-amino-acid polypeptide reads, in one-letter code: RNA polymerase sigma-H factor (193 aa).

Positions 49-62 (DVAQEAFIKAYRAL) match the Polymerase core binding motif. The H-T-H motif DNA-binding region spans 157–176 (YEDIATVMQCPVGTVRSRIF).

Belongs to the sigma-70 factor family. ECF subfamily.

Its function is as follows. Sigma factors are initiation factors that promote the attachment of RNA polymerase to specific initiation sites and are then released. This sigma factor regulates genes such as algD, involved in alginate biosynthesis. The polypeptide is RNA polymerase sigma-H factor (algU) (Pseudomonas aeruginosa (strain ATCC 15692 / DSM 22644 / CIP 104116 / JCM 14847 / LMG 12228 / 1C / PRS 101 / PAO1)).